Consider the following 399-residue polypeptide: Succinate--CoA ligase [ADP-forming] subunit beta (399 aa).

In terms of domain architecture, ATP-grasp spans 9–254 (KALLREFGVP…ESEEDAKEIE (246 aa)). ATP contacts are provided by residues K46, 53–55 (GRG), E109, S112, and E117. N209 and D223 together coordinate Mg(2+). Substrate contacts are provided by residues N274 and 331–333 (GIM).

The protein belongs to the succinate/malate CoA ligase beta subunit family. In terms of assembly, heterotetramer of two alpha and two beta subunits. Mg(2+) is required as a cofactor.

It catalyses the reaction succinate + ATP + CoA = succinyl-CoA + ADP + phosphate. The enzyme catalyses GTP + succinate + CoA = succinyl-CoA + GDP + phosphate. The protein operates within carbohydrate metabolism; tricarboxylic acid cycle; succinate from succinyl-CoA (ligase route): step 1/1. In terms of biological role, succinyl-CoA synthetase functions in the citric acid cycle (TCA), coupling the hydrolysis of succinyl-CoA to the synthesis of either ATP or GTP and thus represents the only step of substrate-level phosphorylation in the TCA. The beta subunit provides nucleotide specificity of the enzyme and binds the substrate succinate, while the binding sites for coenzyme A and phosphate are found in the alpha subunit. The protein is Succinate--CoA ligase [ADP-forming] subunit beta of Nitrobacter winogradskyi (strain ATCC 25391 / DSM 10237 / CIP 104748 / NCIMB 11846 / Nb-255).